The chain runs to 443 residues: Glycerol-3-phosphate acyltransferase 3-like (443 aa).

Transmembrane regions (helical) follow at residues 15–35, 146–166, and 170–190; these read WFSC…SLGI, ISLR…CILL, and ITLT…VGFL. The HXXXXD motif motif lies at 238–243; it reads HTSPID. The helical transmembrane segment at 358-378 threads the bilayer; that stretch reads IMSYLLRMMTSWAIVCNVWYL.

Belongs to the 1-acyl-sn-glycerol-3-phosphate acyltransferase family.

The protein localises to the endoplasmic reticulum membrane. It carries out the reaction sn-glycerol 3-phosphate + an acyl-CoA = a 1-acyl-sn-glycero-3-phosphate + CoA. The enzyme catalyses a 1-acyl-sn-glycero-3-phosphate + an acyl-CoA = a 1,2-diacyl-sn-glycero-3-phosphate + CoA. It participates in glycerolipid metabolism; triacylglycerol biosynthesis. The protein operates within phospholipid metabolism; CDP-diacylglycerol biosynthesis; CDP-diacylglycerol from sn-glycerol 3-phosphate: step 1/3. Its function is as follows. May transfer the acyl-group from acyl-coA to the sn-1 position of glycerol-3-phosphate, an essential step in glycerolipid biosynthesis. Also transfers the acyl-group from acyl-coA to the sn-2 position of 1-acyl-sn-glycerol-3-phosphate (lysophosphatidic acid, or LPA), forming 1,2-diacyl-sn-glycerol-3-phosphate (phosphatidic acid, or PA). This chain is Glycerol-3-phosphate acyltransferase 3-like (agpat9l), found in Danio rerio (Zebrafish).